The chain runs to 388 residues: Pepsin F (388 aa).

An N-terminal signal peptide occupies residues 1-15 (MKWLGLLGLVALSEC). A propeptide spans 16 to 58 (LVTIPLMKVKSMRENLRENDILLDYLEKHPYRPTYKLLSGQQD) (activation peptide). Residues 74 to 385 (YIGIISIGTP…DRANNRIGLA (312 aa)) enclose the Peptidase A1 domain. Aspartate 92 is a catalytic residue. Intrachain disulfides connect cysteine 105-cysteine 110 and cysteine 266-cysteine 270. Residue aspartate 275 is part of the active site. The cysteines at positions 309 and 343 are disulfide-linked.

This sequence belongs to the peptidase A1 family.

It localises to the secreted. It catalyses the reaction Preferential cleavage: hydrophobic, preferably aromatic, residues in P1 and P1' positions. Cleaves 1-Phe-|-Val-2, 4-Gln-|-His-5, 13-Glu-|-Ala-14, 14-Ala-|-Leu-15, 15-Leu-|-Tyr-16, 16-Tyr-|-Leu-17, 23-Gly-|-Phe-24, 24-Phe-|-Phe-25 and 25-Phe-|-Tyr-26 bonds in the B chain of insulin.. Functionally, shows particularly broad specificity; although bonds involving phenylalanine and leucine are preferred, many others are also cleaved to some extent. The polypeptide is Pepsin F (Oryctolagus cuniculus (Rabbit)).